Reading from the N-terminus, the 149-residue chain is Large ribosomal subunit protein bL9 (149 aa).

It belongs to the bacterial ribosomal protein bL9 family.

Binds to the 23S rRNA. The protein is Large ribosomal subunit protein bL9 of Persephonella marina (strain DSM 14350 / EX-H1).